The sequence spans 430 residues: Probable glucose-6-phosphate isomerase (430 aa).

Catalysis depends on glutamate 271, which acts as the Proton donor. Residues histidine 292, histidine 303, and lysine 403 contribute to the active site.

It belongs to the GPI family.

It is found in the cytoplasm. The enzyme catalyses alpha-D-glucose 6-phosphate = beta-D-fructose 6-phosphate. The protein operates within carbohydrate biosynthesis; gluconeogenesis. It functions in the pathway carbohydrate degradation; glycolysis; D-glyceraldehyde 3-phosphate and glycerone phosphate from D-glucose: step 2/4. Catalyzes the reversible isomerization of glucose-6-phosphate to fructose-6-phosphate. The chain is Probable glucose-6-phosphate isomerase from Haloquadratum walsbyi (strain DSM 16790 / HBSQ001).